The chain runs to 60 residues: Large ribosomal subunit protein bL32 (60 aa).

The disordered stretch occupies residues 1-23 (MAVPRNRHSNARKNIRRSHHAKK).

The protein belongs to the bacterial ribosomal protein bL32 family.

The protein is Large ribosomal subunit protein bL32 of Chlamydia caviae (strain ATCC VR-813 / DSM 19441 / 03DC25 / GPIC) (Chlamydophila caviae).